The following is a 264-amino-acid chain: Thymidylate synthase (264 aa).

A dUMP-binding site is contributed by arginine 21. Residue histidine 51 participates in (6R)-5,10-methylene-5,6,7,8-tetrahydrofolate binding. Arginine 126–arginine 127 contributes to the dUMP binding site. Cysteine 146 (nucleophile) is an active-site residue. DUMP-binding positions include arginine 166–aspartate 169, asparagine 177, and histidine 207–tyrosine 209. (6R)-5,10-methylene-5,6,7,8-tetrahydrofolate is bound at residue aspartate 169. Residue alanine 263 coordinates (6R)-5,10-methylene-5,6,7,8-tetrahydrofolate.

It belongs to the thymidylate synthase family. Bacterial-type ThyA subfamily. Homodimer.

It localises to the cytoplasm. It catalyses the reaction dUMP + (6R)-5,10-methylene-5,6,7,8-tetrahydrofolate = 7,8-dihydrofolate + dTMP. Its pathway is pyrimidine metabolism; dTTP biosynthesis. Catalyzes the reductive methylation of 2'-deoxyuridine-5'-monophosphate (dUMP) to 2'-deoxythymidine-5'-monophosphate (dTMP) while utilizing 5,10-methylenetetrahydrofolate (mTHF) as the methyl donor and reductant in the reaction, yielding dihydrofolate (DHF) as a by-product. This enzymatic reaction provides an intracellular de novo source of dTMP, an essential precursor for DNA biosynthesis. The sequence is that of Thymidylate synthase from Alkalilimnicola ehrlichii (strain ATCC BAA-1101 / DSM 17681 / MLHE-1).